The primary structure comprises 460 residues: 3'3'-cGAMP-specific phosphodiesterase 3 (460 aa).

The region spanning 28 to 189 (PPEHCIRCCW…IPLFSRIALL (162 aa)) is the HD domain. The region spanning 260-455 (DDAYLECIVT…LPDEYTQLPH (196 aa)) is the HD-GYP domain. Histidine 317 and aspartate 318 together coordinate a divalent metal cation. Lysine 321 serves as the catalytic Proton donor. Residues histidine 346, histidine 370, histidine 371, and aspartate 399 each coordinate a divalent metal cation.

In terms of assembly, monomer. Mn(2+) is required as a cofactor.

It carries out the reaction 3',3'-cGAMP + H2O = 5'-pApG-3' + H(+). Functionally, phosphodiesterase (PDE) that catalyzes the hydrolysis of 3'3'-cyclic GMP-AMP (3'3'-cGAMP), leading to linear 5'-pApG. Counteracts the function of the 3'3'-cGAMP synthase DncV, and is involved in the modulation of intracellular 3'3'-cGAMP levels. Enhances bacterial chemotaxis and inhibits intestinal colonization in vivo. Thus exerts a crucial role in regulating bacterial infectivity through catalyzing 3'3'-cGAMP degradation. Is specific for 3'3'-cGAMP since it cannot degrade other cGAMP linkage isomers (3'2'-, 2'3'-, and 2'2'-cGAMPs); is also able to hydrolyze c-di-GMP but not c-di-AMP. The protein is 3'3'-cGAMP-specific phosphodiesterase 3 of Vibrio cholerae serotype O1 (strain ATCC 39315 / El Tor Inaba N16961).